The following is a 310-amino-acid chain: Solute carrier family 25 member 47 (310 aa).

Solcar repeat units follow at residues 1-80 (MDFV…CLAH), 93-208 (PTKA…LCEW), and 217-304 (PDVL…VLRL). 6 helical membrane passes run 3-23 (FVAG…LDTV), 55-75 (GLSL…GTYH), 98-114 (ITLS…FLTS), 194-210 (SFAT…EWLT), 219-239 (VLGV…VATP), and 280-298 (LALN…FVAY).

The protein belongs to the mitochondrial carrier (TC 2.A.29) family. In terms of tissue distribution, specifically expressed in liver (at protein level).

The protein localises to the mitochondrion inner membrane. It localises to the mitochondrion outer membrane. It catalyses the reaction NAD(+)(in) = NAD(+)(out). The catalysed reaction is acetyl-CoA(in) = acetyl-CoA(out). Mitochondrial NAD(+) transporter that acts as a 'metabolic gate' in hepatic lipogenesis. Provides NAD(+) substrate to mitochondrial SIRT3 deacetylase and enables its NAD(+)-dependent activities in mitochondrial energy metabolism. This triggers downstream activation of PRKAA1/AMPK-alpha signaling cascade that negatively regulates sterol regulatory element-binding protein (SREBP) transcriptional activities and ATP-consuming lipogenesis to restore cellular energy balance. May transport other mitochondrial metabolites having an aromatic nucleotide and phosphate groups, such as acetyl-CoA. Does not transport amino acids. The transport mechanism remains to be elucidated. This Mus musculus (Mouse) protein is Solute carrier family 25 member 47.